Here is an 830-residue protein sequence, read N- to C-terminus: BLOC-2 complex member HPS5 homolog (830 aa).

WD repeat units lie at residues 25–64 (RNNS…FLAI), 67–106 (SQLG…STDG), and 114–153 (GGPA…GRNI). The stretch at 578 to 604 (DTETIVRLLRKLETLMEENEEPNARLK) forms a coiled coil.

It belongs to the HPS5 family.

Functionally, has a role in the biogenesis of eye pigment granules. Eye pigment granules are specialized forms of late endosomes or lysosomes. Biogenesis of pigment granules in the eye requires molecular components required for protein delivery to lysosomes. The polypeptide is BLOC-2 complex member HPS5 homolog (Anopheles gambiae (African malaria mosquito)).